A 508-amino-acid chain; its full sequence is Putative POTE ankyrin domain family member M (508 aa).

ANK repeat units lie at residues 172-201 (QKRTALHLASANGNSEVVKLLLDRRCQLNI), 205-234 (KKRTALTKAVQCQEDECALMLLEHGTDPNI), 238-267 (YGNTALHYAIYNEDKLMAKALLLYGADIES), 271-300 (HGLTPLLLGVHEQKQQVVKFLIKKKANLNA), and 304-333 (YGRTVLILAVCCGSASIVSLLLEQNIDVSS). Positions 369-487 (SSENSNPEQD…KQLSEEQNTG (119 aa)) are disordered. 2 stretches are compositionally biased toward basic and acidic residues: residues 377–392 (QDLKLTSEEESQRLKG) and 406–421 (EINKGGDRKVEEEMKK). Residues 476–487 (TQKQLSEEQNTG) show a composition bias toward polar residues.

It belongs to the POTE family.

This Homo sapiens (Human) protein is Putative POTE ankyrin domain family member M (POTEM).